The primary structure comprises 692 residues: Protein hook (692 aa).

The 118-residue stretch at 6–123 (SEMYYSLLEW…RLLQLVLGCA (118 aa)) folds into the Calponin-homology (CH) domain. A coiled-coil region spans residues 135–576 (EIMGLEEELQ…YQSKVIQLET (442 aa)). Residues 161 to 180 (AGERSPSSSASGGAGSGGAV) are disordered.

This sequence belongs to the hook family. As to quaternary structure, homodimer. Interacts with microtubules via its N-terminus.

Its subcellular location is the cytoplasm. The protein resides in the cytoskeleton. The protein localises to the endosome. It localises to the synapse. In terms of biological role, involved in endocytic trafficking by stabilizing organelles of the endocytic pathway. Probably acts as a cytoskeletal linker protein required to tether endosome vesicles to the cytoskeleton. Involved in modulation of endocytosis at stages required for down-regulation of membrane proteins that control synapse size. Not involved in synaptic vesicle recycling. Required in R7 cells for boss endocytosis into multivesicular bodies (MVBs). Has a role in regulating adult longevity. The polypeptide is Protein hook (Drosophila willistoni (Fruit fly)).